A 693-amino-acid polypeptide reads, in one-letter code: Transforming growth factor beta activator LRRC33 (693 aa).

Residues 1-19 form the signal peptide; it reads MEFPPLWLCLGFHFLIVEW. At 20-651 the chain is on the extracellular side; the sequence is RSGPGTATAA…CKWEQVDTGL (632 aa). The region spanning 29–56 is the LRRNT domain; that stretch reads ASQGGCKVVDGVADCRGLNLASVPSSLP. LRR repeat units lie at residues 58–79, 82–103, 106–127, 133–155, 158–179, 182–203, 206–227, 228–239, 251–272, and 273–294; these read HSRM…SLQA, RLEN…AFRE, HLRN…SAAA, GLRR…MLQN, SLEV…IFEG, HLVE…AFDG, ELRR…SLTQ, LRFLNVSYNILE, ELEI…PQCG, and KLHT…YNTS. N74 and N85 each carry an N-linked (GlcNAc...) asparagine glycan. Residue N155 is glycosylated (N-linked (GlcNAc...) asparagine). An N-linked (GlcNAc...) asparagine glycan is attached at N232. N292, N309, and N312 each carry an N-linked (GlcNAc...) asparagine glycan. 11 LRR repeats span residues 329–350, 353–374, 377–398, 403–424, 427–448, 463–484, 486–507, 512–533, 537–558, 559–580, and 585–605; these read ALRF…FLKK, SLSH…EHEP, ALTE…PGLT, NLRV…LFDN, SITT…VPVD, SLRS…PFQG, SLTH…SPLW, TLQV…MDFS, NLRA…KGSL, ALRT…VVSE, and GLQT…EGWG. N-linked (GlcNAc...) asparagine glycosylation is found at N408 and N424. N-linked (GlcNAc...) asparagine glycosylation occurs at N500. The LRRCT domain occupies 606 to 644; that stretch reads ALQQHFKTVADLSMVTCNLSSKIVRVVELPEGLPQGCKW. An N-linked (GlcNAc...) asparagine glycan is attached at N623. Residues 652-672 traverse the membrane as a helical segment; sequence FYLVLILPSCLTLLVACTVVF. The Cytoplasmic segment spans residues 673-693; it reads LTFKKPLLQVIKSRCHWSSIY.

Belongs to the LRRC32/LRRC33 family. As to quaternary structure, interacts with TGFB1; associates via disulfide bonds with the Latency-associated peptide chain (LAP) regulatory chain of TGFB1, leading to regulate activation of TGF-beta-1. Interacts (via LRR repeats) with TLR2, TLR3, TLR4, TLR9 and probably other Toll-like receptors. Interacts with CYBB/NOX2; the interaction is direct. In terms of processing, N-glycosylated. Mainly expressed in cells of hematopoietic origin, such as in immune organs such as lymph nodes, thymus and spleen. Among leukocytes, expressed at higher level in myeloid cell such as macrophages, neutrophils and dendritic cells. Highly expressed in central nervous system-resident macrophages, including microglia and perivascular macrophages.

The protein resides in the cell membrane. It is found in the endoplasmic reticulum membrane. In terms of biological role, key regulator of transforming growth factor beta-1 (TGFB1) specifically required for microglia function in the nervous system. Required for activation of latent TGF-beta-1 in macrophages and microglia: associates specifically via disulfide bonds with the Latency-associated peptide (LAP), which is the regulatory chain of TGFB1, and regulates integrin-dependent activation of TGF-beta-1. TGF-beta-1 activation mediated by LRRC33/NRROS is highly localized: there is little spreading of TGF-beta-1 activated from one microglial cell to neighboring microglia, suggesting the existence of localized and selective activation of TGF-beta-1 by LRRC33/NRROS. Indirectly plays a role in Toll-like receptor (TLR) signaling: ability to inhibit TLR-mediated NF-kappa-B activation and cytokine production is probably a consequence of its role in TGF-beta-1 signaling. This chain is Transforming growth factor beta activator LRRC33, found in Mus musculus (Mouse).